The chain runs to 435 residues: Eukaryotic translation initiation factor 3 subunit E (435 aa).

In terms of domain architecture, PCI spans F219–L392.

It belongs to the eIF-3 subunit E family. Component of the eukaryotic translation initiation factor 3 (eIF-3) complex. The eIF-3 complex interacts with pix. Interacts with mxt.

It is found in the cytoplasm. Component of the eukaryotic translation initiation factor 3 (eIF-3) complex, which is involved in protein synthesis of a specialized repertoire of mRNAs and, together with other initiation factors, stimulates binding of mRNA and methionyl-tRNAi to the 40S ribosome. The eIF-3 complex specifically targets and initiates translation of a subset of mRNAs involved in cell proliferation. This is Eukaryotic translation initiation factor 3 subunit E (eIF3-S6) from Drosophila erecta (Fruit fly).